Consider the following 147-residue polypeptide: METLTAISRWLAKQHVVTLCVQQEGELWCANAFYLFDAQKVAFYILTEEKTRHAQMSGPQAAVAGTVNGQPKTVALIRGVQFKGEIRRLEGEESDLARKAYNRRFPVARMLSAPVWEIRLDEIKFTDNTLGFGKKMIWLRSSGTEQA.

This sequence belongs to the UPF0306 family.

This is UPF0306 protein YhbP from Escherichia fergusonii (strain ATCC 35469 / DSM 13698 / CCUG 18766 / IAM 14443 / JCM 21226 / LMG 7866 / NBRC 102419 / NCTC 12128 / CDC 0568-73).